Consider the following 314-residue polypeptide: Olfactory receptor 10A6 (314 aa).

Topologically, residues 1–25 are extracellular; sequence MERQNQSCVVEFILLGFSNYPELQG. Residue asparagine 5 is glycosylated (N-linked (GlcNAc...) asparagine). Residues 26-46 form a helical membrane-spanning segment; sequence QLFVAFLVIYLVTLIGNAIII. Topologically, residues 47-54 are cytoplasmic; that stretch reads VIVSLDQS. The helical transmembrane segment at 55–75 threads the bilayer; sequence LHVPMYLFLLNLSVVDLSFSA. Residues 76–99 are Extracellular-facing; the sequence is VIMPEMLVVLSTEKTTISFGGCFA. A disulfide bridge connects residues cysteine 97 and cysteine 189. The chain crosses the membrane as a helical span at residues 100–120; the sequence is QMYFILLFGGAECFLLGAMAY. Topologically, residues 121–139 are cytoplasmic; that stretch reads DRFAAICHPLNYQMIMNKG. Residues 140 to 160 traverse the membrane as a helical segment; it reads VFMKLIIFSWALGFMLGTVQT. At 161–197 the chain is on the extracellular side; the sequence is SWVSSFPFCGLNEINHISCETPAVLELACADTFLFEI. Residues 198-217 traverse the membrane as a helical segment; it reads YAFTGTFLIILVPFLLILLS. Topologically, residues 218–237 are cytoplasmic; that stretch reads YIRVLFAILKMPSTTGRQKA. Residues 238–258 form a helical membrane-spanning segment; that stretch reads FSTCAAHLTSVTLFYGTASMT. Over 259–271 the chain is Extracellular; sequence YLQPKSGYSPETK. Residues 272–292 traverse the membrane as a helical segment; the sequence is KVMSLSYSLLTPLLNLLIYSL. Residues 293–314 are Cytoplasmic-facing; sequence RNSEMKRALMKLWRRRVVLHTI.

Belongs to the G-protein coupled receptor 1 family.

The protein localises to the cell membrane. Functionally, odorant receptor. The protein is Olfactory receptor 10A6 (OR10A6) of Homo sapiens (Human).